Consider the following 385-residue polypeptide: Flap endonuclease 1 (385 aa).

Positions 1–104 are N-domain; that stretch reads MGILGLSKLI…GELAKRAERR (104 aa). A Mg(2+)-binding site is contributed by aspartate 34. The DNA site is built by arginine 47 and arginine 70. Positions 86, 158, 160, 179, and 181 each coordinate Mg(2+). The interval 122-253 is I-domain; sequence GIEKFNRRLV…KRAIELINTY (132 aa). Glutamate 158 contributes to the DNA binding site. 2 residues coordinate DNA: glycine 231 and aspartate 233. Aspartate 233 contacts Mg(2+). The tract at residues 336-344 is interaction with PCNA; that stretch reads TQVRLDSFF. Residues 346–385 are disordered; that stretch reads TLPSTPNATNAAKRKADEAKKSANNKKAKTSGGGRGRRPK. The span at 368–385 shows a compositional bias: basic residues; the sequence is ANNKKAKTSGGGRGRRPK.

This sequence belongs to the XPG/RAD2 endonuclease family. FEN1 subfamily. Interacts with PCNA. Three molecules of FEN1 bind to one PCNA trimer with each molecule binding to one PCNA monomer. PCNA stimulates the nuclease activity without altering cleavage specificity. Mg(2+) is required as a cofactor. Phosphorylated. Phosphorylation upon DNA damage induces relocalization to the nuclear plasma.

It is found in the nucleus. Its subcellular location is the nucleolus. The protein resides in the nucleoplasm. It localises to the mitochondrion. Its function is as follows. Structure-specific nuclease with 5'-flap endonuclease and 5'-3' exonuclease activities involved in DNA replication and repair. During DNA replication, cleaves the 5'-overhanging flap structure that is generated by displacement synthesis when DNA polymerase encounters the 5'-end of a downstream Okazaki fragment. It enters the flap from the 5'-end and then tracks to cleave the flap base, leaving a nick for ligation. Also involved in the long patch base excision repair (LP-BER) pathway, by cleaving within the apurinic/apyrimidinic (AP) site-terminated flap. Acts as a genome stabilization factor that prevents flaps from equilibrating into structures that lead to duplications and deletions. Also possesses 5'-3' exonuclease activity on nicked or gapped double-stranded DNA, and exhibits RNase H activity. Also involved in replication and repair of rDNA and in repairing mitochondrial DNA. The chain is Flap endonuclease 1 from Drosophila sechellia (Fruit fly).